Reading from the N-terminus, the 362-residue chain is Endolytic peptidoglycan transglycosylase RlpA (362 aa).

Positions 1 to 17 (MRKQWLGICIAAGMLAA) are cleaved as a signal peptide. C18 is lipidated: N-palmitoyl cysteine. A lipid anchor (S-diacylglycerol cysteine) is attached at C18. The disordered stretch occupies residues 198–276 (PDLSGGAGTS…PSTTPATSPA (79 aa)). Low complexity predominate over residues 262–276 (PVVTAPSTTPATSPA). In terms of domain architecture, SPOR spans 285-361 (QSASGNFMVQ…AQLQSFITTA (77 aa)).

This sequence belongs to the RlpA family.

The protein localises to the cell membrane. Lytic transglycosylase with a strong preference for naked glycan strands that lack stem peptides. The polypeptide is Endolytic peptidoglycan transglycosylase RlpA (Escherichia coli O157:H7).